The following is a 452-amino-acid chain: tRNA modification GTPase MnmE (452 aa).

The (6S)-5-formyl-5,6,7,8-tetrahydrofolate site is built by arginine 21, glutamate 78, and lysine 118. In terms of domain architecture, TrmE-type G spans 214-375; that stretch reads GMKVVIAGRP…LREHLKQAMG (162 aa). Asparagine 224 provides a ligand contact to K(+). Residues 224 to 229, 243 to 249, and 268 to 271 each bind GTP; these read NAGKSS, TDIAGTT, and DTAG. Serine 228 contacts Mg(2+). 3 residues coordinate K(+): threonine 243, isoleucine 245, and threonine 248. Threonine 249 is a Mg(2+) binding site. Lysine 452 serves as a coordination point for (6S)-5-formyl-5,6,7,8-tetrahydrofolate.

The protein belongs to the TRAFAC class TrmE-Era-EngA-EngB-Septin-like GTPase superfamily. TrmE GTPase family. In terms of assembly, homodimer. Heterotetramer of two MnmE and two MnmG subunits. The cofactor is K(+).

It localises to the cytoplasm. Functionally, exhibits a very high intrinsic GTPase hydrolysis rate. Involved in the addition of a carboxymethylaminomethyl (cmnm) group at the wobble position (U34) of certain tRNAs, forming tRNA-cmnm(5)s(2)U34. The protein is tRNA modification GTPase MnmE of Haemophilus influenzae (strain PittEE).